The sequence spans 859 residues: Leucine--tRNA ligase (859 aa).

Residues 42-52 carry the 'HIGH' region motif; that stretch reads PYPSGRLHMGH. A 'KMSKS' region motif is present at residues 618–622; sequence KMSKS. Residue Lys621 coordinates ATP.

Belongs to the class-I aminoacyl-tRNA synthetase family.

The protein resides in the cytoplasm. It carries out the reaction tRNA(Leu) + L-leucine + ATP = L-leucyl-tRNA(Leu) + AMP + diphosphate. This chain is Leucine--tRNA ligase, found in Shewanella sp. (strain W3-18-1).